Reading from the N-terminus, the 79-residue chain is MAGGRRGGRRRKKVCYFTSNGITHIDYKDVELLKKFVSERGKILPRRVTGTSAKYQRKLTVAIKRSRQMALLPFVAEEK.

This sequence belongs to the bacterial ribosomal protein bS18 family. In terms of assembly, part of the 30S ribosomal subunit. Forms a tight heterodimer with protein bS6.

Its function is as follows. Binds as a heterodimer with protein bS6 to the central domain of the 16S rRNA, where it helps stabilize the platform of the 30S subunit. The protein is Small ribosomal subunit protein bS18 of Listeria innocua serovar 6a (strain ATCC BAA-680 / CLIP 11262).